A 69-amino-acid polypeptide reads, in one-letter code: uncharacterized protein (69 aa).

A run of 2 helical transmembrane segments spans residues 15–35 (LIIG…ICYV) and 36–56 (LYII…IPKT).

It is found in the cell membrane. This is an uncharacterized protein from Methanocaldococcus jannaschii (strain ATCC 43067 / DSM 2661 / JAL-1 / JCM 10045 / NBRC 100440) (Methanococcus jannaschii).